A 129-amino-acid chain; its full sequence is Small ribosomal subunit protein uS9 (129 aa).

It belongs to the universal ribosomal protein uS9 family.

In Chlorobium luteolum (strain DSM 273 / BCRC 81028 / 2530) (Pelodictyon luteolum), this protein is Small ribosomal subunit protein uS9.